The primary structure comprises 90 residues: Bombyxin B-9 (90 aa).

The first 20 residues, 1–20 (MMKTAVMFILVVVISLTYSS), serve as a signal peptide directing secretion. Cystine bridges form between Cys-30–Cys-75, Cys-42–Cys-88, and Cys-74–Cys-79. A propeptide spans 49–64 (GGAQYAPYWQETYLRS) (c peptide like).

The protein belongs to the insulin family. Heterodimer of a B chain and an A chain linked by two disulfide bonds.

The protein localises to the secreted. Brain peptide responsible for activation of prothoracic glands to produce ecdysone in insects. In Bombyx mori (Silk moth), this protein is Bombyxin B-9 (BBXB9).